Here is a 212-residue protein sequence, read N- to C-terminus: Agglutinin isolectin 1 (212 aa).

A signal peptide spans Met1–Ala26. Gln27 carries the post-translational modification Pyrrolidone carboxylic acid. 4 consecutive Chitin-binding type-1 domains span residues Gln27 to Thr68, Ser69 to Ala111, Asp112 to Thr154, and Asp155 to Gly197. 16 cysteine pairs are disulfide-bonded: Cys29–Cys44, Cys38–Cys50, Cys43–Cys57, Cys61–Cys66, Cys72–Cys87, Cys81–Cys93, Cys86–Cys100, Cys104–Cys109, Cys115–Cys130, Cys124–Cys136, Cys129–Cys143, Cys147–Cys152, Cys158–Cys173, Cys167–Cys179, Cys172–Cys186, and Cys190–Cys195. Met36 to Cys38 contacts substrate. Ser88–Tyr99 serves as a coordination point for substrate. Ser140–Glu141 provides a ligand contact to substrate. A propeptide spanning residues Val198–Glu212 is cleaved from the precursor.

In terms of assembly, homodimer, u-shaped.

N-acetyl-D-glucosamine / N-acetyl-D-neuraminic acid binding lectin. This is Agglutinin isolectin 1 from Triticum aestivum (Wheat).